The following is a 515-amino-acid chain: Putative ribose/galactose/methyl galactoside import ATP-binding protein (515 aa).

ABC transporter domains are found at residues 25–261 (LEVL…VGRE) and 268–515 (LREK…SGLN). ATP is bound at residue 57–64 (GENGAGKS).

It belongs to the ABC transporter superfamily. Carbohydrate importer 2 (CUT2) (TC 3.A.1.2) family.

It is found in the cell inner membrane. It catalyses the reaction D-ribose(out) + ATP + H2O = D-ribose(in) + ADP + phosphate + H(+). The catalysed reaction is D-galactose(out) + ATP + H2O = D-galactose(in) + ADP + phosphate + H(+). Part of an ABC transporter complex involved in carbohydrate import. Could be involved in ribose, galactose and/or methyl galactoside import. Responsible for energy coupling to the transport system. The chain is Putative ribose/galactose/methyl galactoside import ATP-binding protein from Pseudomonas fluorescens (strain ATCC BAA-477 / NRRL B-23932 / Pf-5).